The following is a 570-amino-acid chain: FERM domain-containing protein 5 (570 aa).

The FERM domain occupies 17–298; it reads YSCTVRLLDD…ENQAFYKLEK (282 aa). Residues 308–353 form an interaction with ROCK1 region; sequence SNLFFKGSRFRYSGRVAKEVMESSAKIKREPPEIHRAGMVPSRSCP. The disordered stretch occupies residues 344-367; the sequence is AGMVPSRSCPSITHGPRLSSVPRT. Serine 375 bears the Phosphoserine mark. The segment at 385-407 is disordered; that stretch reads DSAHSTPVRSTSHGDTFLPHVRS. A compositionally biased stretch (polar residues) spans 388–398; that stretch reads HSTPVRSTSHG. Residues 504 to 524 form a helical membrane-spanning segment; sequence LLLVTMGLLFVLLLLLIILTE.

As to quaternary structure, interacts with CTNND1. Interacts with ITGB5 (via cytoplasmic domain) and ROCK1.

It is found in the membrane. The protein localises to the cell junction. It localises to the adherens junction. Functionally, may be involved in regulation of cell migration. May regulate cell-matrix interactions via its interaction with ITGB5 and modifying ITGB5 cytoplasmic tail interactions such as with FERMT2 and TLN1. May regulate ROCK1 kinase activity possibly involved in regulation of actin stress fiber formation. The chain is FERM domain-containing protein 5 (FRMD5) from Homo sapiens (Human).